Here is a 908-residue protein sequence, read N- to C-terminus: Translation initiation factor IF-2 (908 aa).

Residues 145–312 (EIPGLTQRAK…KGKKRQAEKI (168 aa)) form a disordered region. Residues 167-177 (VVERPEARPSA) are compositionally biased toward basic and acidic residues. 2 stretches are compositionally biased toward low complexity: residues 194–217 (RPEG…PRPG) and 263–276 (VAGA…GAAV). A compositionally biased stretch (basic and acidic residues) spans 278 to 296 (KRKEEFKKTELFEKHERVF). The region spanning 408–577 (KRPPVVTIMG…LLQADVLELK (170 aa)) is the tr-type G domain. The tract at residues 417–424 (GHVDHGKT) is G1. 417–424 (GHVDHGKT) contacts GTP. Residues 442 to 446 (GITQH) are G2. Positions 463-466 (DTPG) are G3. GTP-binding positions include 463–467 (DTPGH) and 517–520 (NKID). Residues 517–520 (NKID) are G4. Residues 553 to 555 (SAK) are G5.

This sequence belongs to the TRAFAC class translation factor GTPase superfamily. Classic translation factor GTPase family. IF-2 subfamily.

The protein localises to the cytoplasm. In terms of biological role, one of the essential components for the initiation of protein synthesis. Protects formylmethionyl-tRNA from spontaneous hydrolysis and promotes its binding to the 30S ribosomal subunits. Also involved in the hydrolysis of GTP during the formation of the 70S ribosomal complex. The sequence is that of Translation initiation factor IF-2 from Geotalea daltonii (strain DSM 22248 / JCM 15807 / FRC-32) (Geobacter daltonii).